We begin with the raw amino-acid sequence, 301 residues long: MSTKREDHLRKGADVTPTEALVAGSIAGAISRAFTAPLDTIKIRLQLQPKGFKHRKSVVTIVKNLLENEGIIALWKGNVPAEILYILYGGVQFGSYSIISKSVSKLENNYRINLSSANHSLIVGIGSGIVSTLVTYPFDLLRTRLIANKNRGLLSMTGTIKDIIKLEGIRGIYAGIRPAMLSVSSTTGLMFWSYELARELSNNYQRVPFIEAICGFIAGATSKGITFPLDTLRKRCQMCSVVHGRPYTASHIFVTILKNEGVFGLYKGFGISVLKTAPTSAISLFMYEYSLSFIRKIRVIE.

Solcar repeat units follow at residues V15–S102, S115–L200, and R206–F293. The next 6 membrane-spanning stretches (helical) occupy residues A20–L38, V79–I99, L121–L141, I172–W192, V207–F227, and I252–S272.

The protein belongs to the mitochondrial carrier (TC 2.A.29) family.

The protein resides in the mitochondrion inner membrane. Functionally, mitochondrial transporter that mediates uptake of thiamine pyrophosphate (ThPP) into mitochondria. This is Mitochondrial thiamine pyrophosphate carrier 1 (TPC1) from Candida albicans (strain SC5314 / ATCC MYA-2876) (Yeast).